The sequence spans 74 residues: MQLFVRAQELHTLEVTGQETVAQIKDHVASLEGIAPEDQVVLLAGSPLEDEATLGQCGVEALTTLEVAGRMLGG.

The protein belongs to the ubiquitin family.

The chain is Ubiquitin-like protein FUBI (Fau) from Mus spicilegus (Steppe mouse).